The sequence spans 532 residues: Autoinducer-2 kinase (532 aa).

It belongs to the FGGY kinase family.

The protein resides in the cytoplasm. The enzyme catalyses (S)-4,5-dihydroxypentane-2,3-dione + ATP = (2S)-2-hydroxy-3,4-dioxopentyl phosphate + ADP + H(+). Catalyzes the phosphorylation of autoinducer-2 (AI-2) to phospho-AI-2, which subsequently inactivates the transcriptional regulator LsrR and leads to the transcription of the lsr operon. Phosphorylates the ring-open form of (S)-4,5-dihydroxypentane-2,3-dione (DPD), which is the precursor to all AI-2 signaling molecules, at the C5 position. This chain is Autoinducer-2 kinase, found in Klebsiella pneumoniae subsp. pneumoniae (strain ATCC 700721 / MGH 78578).